We begin with the raw amino-acid sequence, 42 residues long: Photosystem I reaction center subunit IX (42 aa).

Residues 7–27 (YLSTAPVLATLWFGFLAGLLI) traverse the membrane as a helical segment.

The protein belongs to the PsaJ family.

It localises to the plastid. Its subcellular location is the chloroplast thylakoid membrane. In terms of biological role, may help in the organization of the PsaE and PsaF subunits. This is Photosystem I reaction center subunit IX from Psilotum nudum (Whisk fern).